Reading from the N-terminus, the 3907-residue chain is A-kinase anchor protein 9 (3907 aa).

The segment covering 1 to 14 (MEDEERQKKLEAGK) has biased composition (basic and acidic residues). A disordered region spans residues 1–57 (MEDEERQKKLEAGKAKLAQFRQRKAQSDGQSPSKKQKKKRKTSSSKHDVSAHHDLNI). A compositionally biased stretch (basic residues) spans 34-44 (KKQKKKRKTSS). Residues 45-56 (SKHDVSAHHDLN) are compositionally biased toward basic and acidic residues. Coiled-coil stretches lie at residues 152–902 (DSPT…ELHL), 932–1010 (EVVE…ENVQ), 1088–1173 (QPSE…QTMK), 1241–1268 (ELQD…EEYN), 1324–1380 (KLSS…ESTV), 1422–1447 (VKEE…VAKV), and 1573–1647 (SMDA…DNEN). Position 153 is a phosphoserine (Ser-153). Ser-1327 is modified (phosphoserine). Residues 1682–1692 (STQTQNGNENQ) are compositionally biased toward low complexity. The segment at 1682–1713 (STQTQNGNENQGEVEEQTFKEKELDRKPEDVP) is disordered. The span at 1698 to 1711 (QTFKEKELDRKPED) shows a compositional bias: basic and acidic residues. Ser-1765 is subject to Phosphoserine. Coiled coils occupy residues 1845-2443 (NISS…VEKI), 2532-2549 (ETEM…IVEE), 2591-2764 (QLRE…SKKA), 3061-3088 (LNCL…ADRR), 3120-3466 (ELLE…NLNE), and 3583-3685 (SLTE…NDSL). The interval 2542–2555 (NLQKIVEEKVAAAL) is PKA-RII subunit binding domain. Residues 3377–3405 (RQQMEKDRQVHRKTLQTEQEANTEGQKKM) form a disordered region. Phosphoserine is present on residues Ser-3690, Ser-3842, Ser-3865, and Ser-3897.

Interacts with the regulatory region of protein kinase N (PKN), protein phosphatase 2A (PP2A), protein phosphatase 1 (PP1) and the immature non-phosphorylated form of PKC epsilon. Interacts with CIP4 and FNBP1. Interacts with chloride intracellular channel proteins CLIC1, CLIC4 and CLIC5. CSNK1D binding promotes its centrosomal subcellular location. Interacts with GM130/GOLGA2; leading to recruitment to the Golgi apparatus. Interacts with KCNQ1; targets protein kinase A (PKA) catalytic and regulatory subunits and protein phosphatase 1 (PP1), to the heterodimer KCNQ1-KCNE1. Interacts with PDE4DIP isoform 13/MMG8/SMYLE; this interaction stabilizes both proteins. In complex with PDE4DIP isoform 13, recruits CAMSAP2 to the Golgi apparatus. Forms a pericentrosomal complex with CDK5RAP2, EB1/MAPRE1 and PDE4DIP isoform 13; within this complex, MAPRE1 binding to CDK5RAP2 may be mediated by PDE4DIP. Interacts with MAPRE1 and MAPRE3. Interacts (via C-terminus) with CAMSAP2; this interaction is much stronger in the presence of PDE4DIP isoform 13/MMG8/SMYLE. Interacts with CAMSAP3. Interacts (via C-terminus) with the gamma-tubulin ring complex (gamma-TuRC), composed of gamma-tubulin, TUBGCP2, TUBGCP3, TUBGCP4, TUBGCP5 and TUBGCP6. As to expression, widely expressed. Isoform 4: Highly expressed in skeletal muscle and in pancreas.

It is found in the golgi apparatus. The protein resides in the cytoplasm. The protein localises to the cytoskeleton. It localises to the microtubule organizing center. Its subcellular location is the centrosome. Scaffolding protein that assembles several protein kinases and phosphatases on the centrosome and Golgi apparatus. Required to maintain the integrity of the Golgi apparatus. Required for microtubule nucleation at the cis-side of the Golgi apparatus. Required for association of the centrosomes with the poles of the bipolar mitotic spindle during metaphase. In complex with PDE4DIP isoform 13/MMG8/SMYLE, recruits CAMSAP2 to the Golgi apparatus and tethers non-centrosomal minus-end microtubules to the Golgi, an important step for polarized cell movement. In complex with PDE4DIP isoform 13/MMG8/SMYLE, EB1/MAPRE1 and CDK5RAP2, contributes to microtubules nucleation and extension also from the centrosome to the cell periphery. Functionally, associated with the N-methyl-D-aspartate receptor and is specifically found in the neuromuscular junction (NMJ) as well as in neuronal synapses, suggesting a role in the organization of postsynaptic specializations. The polypeptide is A-kinase anchor protein 9 (AKAP9) (Homo sapiens (Human)).